Consider the following 306-residue polypeptide: MKVLWAVLVVTLLAGCQADVEPALEVGEPAPEVREPAMWQSGQPWELALGRFWDYLRWVQTLSDQVQEELLSSQVTQELTVLMEDTMKEVKAYKSELEQELGPMAEDTKARLSKELQAAQARLGADMEEVRNRLTQYRSEVQTMLGQSAEELRARLASHLRKLRKRLLRDAEDLQKRLAVYKAGAQEGAERGVSAIRERLGSLVEQGRLRAAQTSQPLRERAQAWGERLRGRLEEVGGQARDRLDVVREQMEEVRAKVEEQAEAFQARLKGWFEPVVEDMRRQWAELIEKVQVAVGASTPAPSEKH.

The signal sequence occupies residues 1–18 (MKVLWAVLVVTLLAGCQA). 8 consecutive repeat copies span residues 81–102 (VLME…QELG), 103–124 (PMAE…ARLG), 125–146 (ADME…TMLG), 147–168 (QSAE…KRLL), 169–190 (RDAE…EGAE), 191–212 (RGVS…LRAA), 213–230 (QTSQ…ERLR), and 231–252 (GRLE…EQME). The tract at residues 81 to 252 (VLMEDTMKEV…RLDVVREQME (172 aa)) is 8 X 22 AA approximate tandem repeats. Met144 carries the methionine sulfoxide modification. Ser148 is modified (phosphoserine). The interval 159–169 (HLRKLRKRLLR) is LDL and other lipoprotein receptors binding. Position 163–166 (163–166 (LRKR)) interacts with heparin. Residues 211–280 (AAQTSQPLRE…GWFEPVVEDM (70 aa)) form a lipid-binding and lipoprotein association region. 226 to 233 (GERLRGRL) is a binding site for heparin. Positions 268–280 (RLKGWFEPVVEDM) are specificity for association with VLDL.

The protein belongs to the apolipoprotein A1/A4/E family. Homotetramer. May interact with ABCA1; functionally associated with ABCA1 in the biogenesis of HDLs. May interact with APP/A4 amyloid-beta peptide; the interaction is extremely stable in vitro but its physiological significance is unclear. May interact with MAPT. May interact with MAP2. In the cerebrospinal fluid, interacts with secreted SORL1. Interacts with PMEL; this allows the loading of PMEL luminal fragment on ILVs to induce fibril nucleation. APOE exists as multiple glycosylated and sialylated glycoforms within cells and in plasma. The extent of glycosylation and sialylation are tissue and context specific. Post-translationally, glycated in plasma VLDL. In terms of processing, phosphorylated by FAM20C in the extracellular medium.

The protein resides in the secreted. The protein localises to the extracellular space. It localises to the extracellular matrix. Its subcellular location is the extracellular vesicle. It is found in the endosome. The protein resides in the multivesicular body. In terms of biological role, APOE is an apolipoprotein, a protein associating with lipid particles, that mainly functions in lipoprotein-mediated lipid transport between organs via the plasma and interstitial fluids. APOE is a core component of plasma lipoproteins and is involved in their production, conversion and clearance. Apolipoproteins are amphipathic molecules that interact both with lipids of the lipoprotein particle core and the aqueous environment of the plasma. As such, APOE associates with chylomicrons, chylomicron remnants, very low density lipoproteins (VLDL) and intermediate density lipoproteins (IDL) but shows a preferential binding to high-density lipoproteins (HDL). It also binds a wide range of cellular receptors including the LDL receptor/LDLR, the LDL receptor-related proteins LRP1, LRP2 and LRP8 and the very low-density lipoprotein receptor/VLDLR that mediate the cellular uptake of the APOE-containing lipoprotein particles. Finally, APOE also has a heparin-binding activity and binds heparan-sulfate proteoglycans on the surface of cells, a property that supports the capture and the receptor-mediated uptake of APOE-containing lipoproteins by cells. A main function of APOE is to mediate lipoprotein clearance through the uptake of chylomicrons, VLDLs, and HDLs by hepatocytes. APOE is also involved in the biosynthesis by the liver of VLDLs as well as their uptake by peripheral tissues ensuring the delivery of triglycerides and energy storage in muscle, heart and adipose tissues. By participating in the lipoprotein-mediated distribution of lipids among tissues, APOE plays a critical role in plasma and tissues lipid homeostasis. APOE is also involved in two steps of reverse cholesterol transport, the HDLs-mediated transport of cholesterol from peripheral tissues to the liver, and thereby plays an important role in cholesterol homeostasis. First, it is functionally associated with ABCA1 in the biogenesis of HDLs in tissues. Second, it is enriched in circulating HDLs and mediates their uptake by hepatocytes. APOE also plays an important role in lipid transport in the central nervous system, regulating neuron survival and sprouting. This Hystrix brachyura (Malayan porcupine) protein is Apolipoprotein E (APOE).